The following is a 143-amino-acid chain: Transcriptional regulator MraZ (143 aa).

SpoVT-AbrB domains lie at 5–47 (EFQH…TLTE) and 76–119 (AVEV…DRKL).

It belongs to the MraZ family. As to quaternary structure, forms oligomers.

The protein resides in the cytoplasm. It is found in the nucleoid. The polypeptide is Transcriptional regulator MraZ (Macrococcus caseolyticus (strain JCSC5402) (Macrococcoides caseolyticum)).